We begin with the raw amino-acid sequence, 30 residues long: Cytochrome c oxidase subunit 5C (30 aa).

Residues 15–30 (VVKELVIXXXLGLXAG) form a helical membrane-spanning segment.

It belongs to the cytochrome c oxidase subunit 5C family.

The protein localises to the mitochondrion inner membrane. In terms of biological role, this protein is one of the nuclear-coded polypeptide chains of cytochrome c oxidase, the terminal oxidase in mitochondrial electron transport. This Solanum tuberosum (Potato) protein is Cytochrome c oxidase subunit 5C (COX5C).